Reading from the N-terminus, the 275-residue chain is Autophagy protein 5 (275 aa).

Residue Met-1 is modified to N-acetylmethionine. A Glycyl lysine isopeptide (Lys-Gly) (interchain with G-Cter in ATG12) cross-link involves residue Lys-130.

It belongs to the ATG5 family. As to quaternary structure, forms a conjugate with ATG12. Part of the minor complex composed of 4 sets of ATG12-ATG5 and ATG16L1 (400 kDa); this complex interacts with ATG3 leading to disruption of ATG7 interaction and promotion of ATG8-like proteins lipidation. Forms an 800-kDa complex composed of ATG12-ATG5 and ATG16L2. The ATG12-ATG5 conjugate interacts with RAB33A; this interaction is bridged by ATG16L1 and promotes ATG12-ATG5-ATG16L1 complex recruitment to phagophores. Interacts with TECPR1; the interaction is direct and does not take place when ATG16L1 is associated with the ATG5-ATG12 conjugate. Interacts with DHX58/RIG-1, IFIH1/MDA5 and MAVS/IPS-1 in monomeric form as well as in ATG12-ATG5 conjugate form. The interaction with MAVS is further enhanced upon vesicular stomatitis virus (VSV) infection. Interacts with ATG3. Interacts with ATG7 and ATG10. Interacts with FADD. Interacts with Bassoon/BSN; this interaction is important for the regulation of presynaptic autophagy. Interacts with ATG16L2. Post-translationally, conjugated to ATG12; which is essential for autophagy, but is not required for association with isolation membrane. In terms of processing, acetylated by EP300. As to expression, ubiquitous.

It is found in the cytoplasm. The protein resides in the preautophagosomal structure membrane. Functionally, involved in autophagic vesicle formation. Conjugation with ATG12, through a ubiquitin-like conjugating system involving ATG7 as an E1-like activating enzyme and ATG10 as an E2-like conjugating enzyme, is essential for its function. The ATG12-ATG5 conjugate acts as an E3-like enzyme which is required for lipidation of ATG8 family proteins and their association to the vesicle membranes. Involved in mitochondrial quality control after oxidative damage, and in subsequent cellular longevity. Plays a critical role in multiple aspects of lymphocyte development and is essential for both B and T lymphocyte survival and proliferation. Required for optimal processing and presentation of antigens for MHC II. Involved in the maintenance of axon morphology and membrane structures, as well as in normal adipocyte differentiation. Promotes primary ciliogenesis through removal of OFD1 from centriolar satellites and degradation of IFT20 via the autophagic pathway. As part of the ATG8 conjugation system with ATG12 and ATG16L1, required for recruitment of LRRK2 to stressed lysosomes and induction of LRRK2 kinase activity in response to lysosomal stress. May play an important role in the apoptotic process, possibly within the modified cytoskeleton. Its expression is a relatively late event in the apoptotic process, occurring downstream of caspase activity. Plays a crucial role in IFN-gamma-induced autophagic cell death by interacting with FADD. In terms of biological role, (Microbial infection) May act as a proviral factor. In association with ATG12, negatively regulates the innate antiviral immune response by impairing the type I IFN production pathway upon vesicular stomatitis virus (VSV) infection. This Mus musculus (Mouse) protein is Autophagy protein 5.